Consider the following 400-residue polypeptide: Protein transport protein HofC homolog (400 aa).

Transmembrane regions (helical) follow at residues 165–185 (YPII…HFVL), 209–229 (LADF…LLAI), and 370–390 (LLII…LPIF).

It belongs to the GSP F family.

It localises to the cell inner membrane. The polypeptide is Protein transport protein HofC homolog (hofC) (Escherichia coli (strain K12)).